Reading from the N-terminus, the 315-residue chain is Ribosomal protein L11 methyltransferase (315 aa).

The S-adenosyl-L-methionine site is built by T164, G185, D207, and N249.

It belongs to the methyltransferase superfamily. PrmA family.

It is found in the cytoplasm. The enzyme catalyses L-lysyl-[protein] + 3 S-adenosyl-L-methionine = N(6),N(6),N(6)-trimethyl-L-lysyl-[protein] + 3 S-adenosyl-L-homocysteine + 3 H(+). Its function is as follows. Methylates ribosomal protein L11. The chain is Ribosomal protein L11 methyltransferase from Lactobacillus gasseri (strain ATCC 33323 / DSM 20243 / BCRC 14619 / CIP 102991 / JCM 1131 / KCTC 3163 / NCIMB 11718 / NCTC 13722 / AM63).